A 225-amino-acid chain; its full sequence is MSGRAGRHGLADDAQLTMHAAALIRLGARLQMLEIECALPREHLVRLYREVRGVAAPKGLLPSSIDWYMTWLANIHASLFHNIYRFLRNQAGCPRLEALVKAYTLYAEQGDATRRALPLDLTRALPLDLTRAWMLVRFVDAGVLDIARCRDCGAAFITYRHALRRHPVCVACRLPARAGKRAVAAPQRATADTRHARRQDARTAVVACRDGSTTTGGASGERHAV.

Residues Cys-149, Cys-152, Cys-169, and Cys-172 each coordinate Zn(2+).

Belongs to the FlhC family. As to quaternary structure, heterohexamer composed of two FlhC and four FlhD subunits. Each FlhC binds a FlhD dimer, forming a heterotrimer, and a hexamer assembles by dimerization of two heterotrimers. The cofactor is Zn(2+).

It is found in the cytoplasm. Functions in complex with FlhD as a master transcriptional regulator that regulates transcription of several flagellar and non-flagellar operons by binding to their promoter region. Activates expression of class 2 flagellar genes, including fliA, which is a flagellum-specific sigma factor that turns on the class 3 genes. Also regulates genes whose products function in a variety of physiological pathways. The protein is Flagellar transcriptional regulator FlhC of Burkholderia lata (strain ATCC 17760 / DSM 23089 / LMG 22485 / NCIMB 9086 / R18194 / 383).